The sequence spans 126 residues: Holo-[acyl-carrier-protein] synthase (126 aa).

Residues Asp-9 and Glu-58 each contribute to the Mg(2+) site.

The protein belongs to the P-Pant transferase superfamily. AcpS family. The cofactor is Mg(2+).

The protein resides in the cytoplasm. It carries out the reaction apo-[ACP] + CoA = holo-[ACP] + adenosine 3',5'-bisphosphate + H(+). Transfers the 4'-phosphopantetheine moiety from coenzyme A to a Ser of acyl-carrier-protein. The chain is Holo-[acyl-carrier-protein] synthase from Yersinia pestis bv. Antiqua (strain Angola).